Reading from the N-terminus, the 238-residue chain is Large ribosomal subunit protein uL2 (238 aa).

Residues 201–238 (PFGGGGRQHPGRPKTVSRNTPPGRKVGSIAARRTGVGH) form a disordered region.

The protein belongs to the universal ribosomal protein uL2 family. Part of the 50S ribosomal subunit. Forms a bridge to the 30S subunit in the 70S ribosome.

Its function is as follows. One of the primary rRNA binding proteins. Required for association of the 30S and 50S subunits to form the 70S ribosome, for tRNA binding and peptide bond formation. It has been suggested to have peptidyltransferase activity; this is somewhat controversial. Makes several contacts with the 16S rRNA in the 70S ribosome. The protein is Large ribosomal subunit protein uL2 of Methanocella arvoryzae (strain DSM 22066 / NBRC 105507 / MRE50).